The primary structure comprises 269 residues: Pertussis toxin subunit 1 homolog (269 aa).

Positions 1–34 (MRCTRAIRQTARTGWLTWLAILAVTAPMTSPAWA) are cleaved as a signal peptide.

Belongs to the bacterial exotoxin subunit A family.

The protein is Pertussis toxin subunit 1 homolog (ptxA) of Bordetella parapertussis (strain 12822 / ATCC BAA-587 / NCTC 13253).